The following is a 55-amino-acid chain: Large ribosomal subunit protein bL33 (55 aa).

The protein belongs to the bacterial ribosomal protein bL33 family.

This chain is Large ribosomal subunit protein bL33, found in Methylobacterium radiotolerans (strain ATCC 27329 / DSM 1819 / JCM 2831 / NBRC 15690 / NCIMB 10815 / 0-1).